Here is a 194-residue protein sequence, read N- to C-terminus: Protein PHLOEM PROTEIN 2-LIKE A2 (194 aa).

Residues 49 to 71 (VTFVFFCFFKISLNSAYLYTLYS) traverse the membrane as a helical segment.

In terms of tissue distribution, vascular tissues, specifically in phloem companion cell-sieve element complexes.

The protein resides in the membrane. The protein is Protein PHLOEM PROTEIN 2-LIKE A2 (PP2A2) of Arabidopsis thaliana (Mouse-ear cress).